The sequence spans 423 residues: Adenylosuccinate synthetase (423 aa).

GTP contacts are provided by residues 12-18 (GDEGKGK) and 40-42 (GHT). D13 acts as the Proton acceptor in catalysis. Positions 13 and 40 each coordinate Mg(2+). Residues 13-16 (DEGK), 38-41 (NAGH), T129, R143, Q224, T239, and R303 each bind IMP. Residue H41 is the Proton donor of the active site. 299-305 (ATTGRKR) is a binding site for substrate. Residues R305, 331-333 (KGD), and 412-414 (SVG) each bind GTP.

The protein belongs to the adenylosuccinate synthetase family. As to quaternary structure, homodimer. It depends on Mg(2+) as a cofactor.

The protein resides in the cytoplasm. It carries out the reaction IMP + L-aspartate + GTP = N(6)-(1,2-dicarboxyethyl)-AMP + GDP + phosphate + 2 H(+). It functions in the pathway purine metabolism; AMP biosynthesis via de novo pathway; AMP from IMP: step 1/2. In terms of biological role, plays an important role in the de novo pathway of purine nucleotide biosynthesis. Catalyzes the first committed step in the biosynthesis of AMP from IMP. The sequence is that of Adenylosuccinate synthetase from Christiangramia forsetii (strain DSM 17595 / CGMCC 1.15422 / KT0803) (Gramella forsetii).